Reading from the N-terminus, the 207-residue chain is Vascular endothelial growth factor B (207 aa).

The N-terminal stretch at 1–21 (MSPLLRRLLLVALLQLARTQA) is a signal peptide. 3 cysteine pairs are disulfide-bonded: Cys-47/Cys-89, Cys-78/Cys-122, and Cys-82/Cys-124. Basic and acidic residues predominate over residues 129 to 139 (KESAVKPDRVA). A disordered region spans residues 129–178 (KESAVKPDRVAIPHHRPQPRSVPGWDSTPGASSPADIIHPTPAPGSSARL).

It belongs to the PDGF/VEGF growth factor family. In terms of assembly, homodimer; disulfide-linked. Can also form heterodimer with VEGF. VEGF-B186 is O-glycosylated. As to expression, abundantly expressed in heart, brain, kidney and skeletal muscle.

The protein localises to the secreted. Its function is as follows. Growth factor for endothelial cells. VEGF-B167 binds heparin and neuropilin-1 whereas the binding to neuropilin-1 of VEGF-B186 is regulated by proteolysis. VEGF-B seems to be required for normal heart function in adult but is not required for proper development of the cardiovascular system either during development or for angiogenesis in adults. The chain is Vascular endothelial growth factor B (Vegfb) from Mus musculus (Mouse).